A 336-amino-acid polypeptide reads, in one-letter code: Fructose-1,6-bisphosphatase class 1 (336 aa).

Mg(2+) is bound by residues Glu-90, Asp-112, Leu-114, and Asp-115. Residues 115–118, Asn-207, and Lys-273 each bind substrate; that span reads DGSS. Residue Glu-279 participates in Mg(2+) binding.

It belongs to the FBPase class 1 family. As to quaternary structure, homotetramer. Mg(2+) serves as cofactor.

It is found in the cytoplasm. It carries out the reaction beta-D-fructose 1,6-bisphosphate + H2O = beta-D-fructose 6-phosphate + phosphate. It participates in carbohydrate biosynthesis; gluconeogenesis. This chain is Fructose-1,6-bisphosphatase class 1, found in Xanthomonas axonopodis pv. citri (strain 306).